A 1207-amino-acid chain; its full sequence is DNA-directed RNA polymerase subunit beta' (1207 aa).

Zn(2+)-binding residues include Cys60, Cys62, Cys75, and Cys78. Mg(2+) is bound by residues Asp449, Asp451, and Asp453. Zn(2+) is bound by residues Cys822, Cys896, Cys903, and Cys906.

This sequence belongs to the RNA polymerase beta' chain family. The RNAP catalytic core consists of 2 alpha, 1 beta, 1 beta' and 1 omega subunit. When a sigma factor is associated with the core the holoenzyme is formed, which can initiate transcription. The cofactor is Mg(2+). Zn(2+) serves as cofactor.

It catalyses the reaction RNA(n) + a ribonucleoside 5'-triphosphate = RNA(n+1) + diphosphate. Its function is as follows. DNA-dependent RNA polymerase catalyzes the transcription of DNA into RNA using the four ribonucleoside triphosphates as substrates. The chain is DNA-directed RNA polymerase subunit beta' from Staphylococcus aureus (strain USA300).